Here is a 285-residue protein sequence, read N- to C-terminus: Methanethiol S-methyltransferase 1 (285 aa).

The next 5 helical transmembrane spans lie at 55–75 (AYLV…GLVV), 88–108 (AEAV…HSVM), 132–152 (LFAS…PTVI), 162–182 (VTLV…TFII), and 224–244 (FIVA…FAAV).

This sequence belongs to the nurim family.

It localises to the membrane. It catalyses the reaction methanethiol + S-adenosyl-L-methionine = dimethyl sulfide + S-adenosyl-L-homocysteine + H(+). Functionally, catalyzes the methylation of methanethiol (MeSH) to yield dimethylsulphide (DMS). The protein is Methanethiol S-methyltransferase 1 of Bradyrhizobium diazoefficiens (strain JCM 10833 / BCRC 13528 / IAM 13628 / NBRC 14792 / USDA 110).